The following is a 353-amino-acid chain: Ribosomal RNA small subunit methyltransferase H (353 aa).

Residues 49–51, D68, F95, D126, and Q133 each bind S-adenosyl-L-methionine; that span reads GGH.

The protein belongs to the methyltransferase superfamily. RsmH family.

It localises to the cytoplasm. The catalysed reaction is cytidine(1402) in 16S rRNA + S-adenosyl-L-methionine = N(4)-methylcytidine(1402) in 16S rRNA + S-adenosyl-L-homocysteine + H(+). In terms of biological role, specifically methylates the N4 position of cytidine in position 1402 (C1402) of 16S rRNA. The sequence is that of Ribosomal RNA small subunit methyltransferase H from Corynebacterium urealyticum (strain ATCC 43042 / DSM 7109).